The sequence spans 143 residues: Nucleoside diphosphate kinase (143 aa).

Residues Lys11, Phe59, Arg87, Thr93, Arg104, and Asn114 each coordinate ATP. The Pros-phosphohistidine intermediate role is filled by His117.

It belongs to the NDK family. Homotetramer. Requires Mg(2+) as cofactor.

Its subcellular location is the cytoplasm. The enzyme catalyses a 2'-deoxyribonucleoside 5'-diphosphate + ATP = a 2'-deoxyribonucleoside 5'-triphosphate + ADP. It catalyses the reaction a ribonucleoside 5'-diphosphate + ATP = a ribonucleoside 5'-triphosphate + ADP. In terms of biological role, major role in the synthesis of nucleoside triphosphates other than ATP. The ATP gamma phosphate is transferred to the NDP beta phosphate via a ping-pong mechanism, using a phosphorylated active-site intermediate. In Shigella boydii serotype 4 (strain Sb227), this protein is Nucleoside diphosphate kinase.